We begin with the raw amino-acid sequence, 179 residues long: UPF0302 protein YpiB (179 aa).

It belongs to the UPF0302 family.

In Bacillus subtilis (strain 168), this protein is UPF0302 protein YpiB (ypiB).